The primary structure comprises 295 residues: Phosphatidylserine decarboxylase proenzyme (295 aa).

Residues D113, H169, and S256 each act as charge relay system; for autoendoproteolytic cleavage activity in the active site. The active-site Schiff-base intermediate with substrate; via pyruvic acid; for decarboxylase activity is the S256. Pyruvic acid (Ser); by autocatalysis is present on S256.

Belongs to the phosphatidylserine decarboxylase family. PSD-B subfamily. Prokaryotic type II sub-subfamily. As to quaternary structure, heterodimer of a large membrane-associated beta subunit and a small pyruvoyl-containing alpha subunit. The cofactor is pyruvate. Post-translationally, is synthesized initially as an inactive proenzyme. Formation of the active enzyme involves a self-maturation process in which the active site pyruvoyl group is generated from an internal serine residue via an autocatalytic post-translational modification. Two non-identical subunits are generated from the proenzyme in this reaction, and the pyruvate is formed at the N-terminus of the alpha chain, which is derived from the carboxyl end of the proenzyme. The autoendoproteolytic cleavage occurs by a canonical serine protease mechanism, in which the side chain hydroxyl group of the serine supplies its oxygen atom to form the C-terminus of the beta chain, while the remainder of the serine residue undergoes an oxidative deamination to produce ammonia and the pyruvoyl prosthetic group on the alpha chain. During this reaction, the Ser that is part of the protease active site of the proenzyme becomes the pyruvoyl prosthetic group, which constitutes an essential element of the active site of the mature decarboxylase.

The protein resides in the cell membrane. It carries out the reaction a 1,2-diacyl-sn-glycero-3-phospho-L-serine + H(+) = a 1,2-diacyl-sn-glycero-3-phosphoethanolamine + CO2. It functions in the pathway phospholipid metabolism; phosphatidylethanolamine biosynthesis; phosphatidylethanolamine from CDP-diacylglycerol: step 2/2. Functionally, catalyzes the formation of phosphatidylethanolamine (PtdEtn) from phosphatidylserine (PtdSer). The protein is Phosphatidylserine decarboxylase proenzyme of Clostridium botulinum (strain Langeland / NCTC 10281 / Type F).